Reading from the N-terminus, the 360-residue chain is Phenylalanine--tRNA ligase alpha subunit (360 aa).

Glu264 contributes to the Mg(2+) binding site.

Belongs to the class-II aminoacyl-tRNA synthetase family. Phe-tRNA synthetase alpha subunit type 1 subfamily. In terms of assembly, tetramer of two alpha and two beta subunits. The cofactor is Mg(2+).

It localises to the cytoplasm. It catalyses the reaction tRNA(Phe) + L-phenylalanine + ATP = L-phenylalanyl-tRNA(Phe) + AMP + diphosphate + H(+). This is Phenylalanine--tRNA ligase alpha subunit from Streptomyces avermitilis (strain ATCC 31267 / DSM 46492 / JCM 5070 / NBRC 14893 / NCIMB 12804 / NRRL 8165 / MA-4680).